Here is a 199-residue protein sequence, read N- to C-terminus: Mediator of RNA polymerase II transcription subunit 10 (199 aa).

It belongs to the Mediator complex subunit 10 family. Component of the Mediator complex.

The protein resides in the nucleus. Component of the Mediator complex, a coactivator involved in the regulated transcription of nearly all RNA polymerase II-dependent genes. Mediator functions as a bridge to convey information from gene-specific regulatory proteins to the basal RNA polymerase II transcription machinery. Mediator is recruited to promoters by direct interactions with regulatory proteins and serves as a scaffold for the assembly of a functional preinitiation complex with RNA polymerase II and the general transcription factors. This chain is Mediator of RNA polymerase II transcription subunit 10 (NUT2), found in Candida glabrata (strain ATCC 2001 / BCRC 20586 / JCM 3761 / NBRC 0622 / NRRL Y-65 / CBS 138) (Yeast).